The chain runs to 212 residues: Pyridoxine/pyridoxamine 5'-phosphate oxidase 1 (212 aa).

Substrate is bound by residues 8 to 11 (RTDY) and lysine 66. FMN is bound by residues 61–66 (RIVLLK), 76–77 (FT), lysine 83, and glutamine 105. Residues tyrosine 123, arginine 127, and serine 131 each coordinate substrate. FMN is bound by residues 140–141 (QS) and tryptophan 184. A substrate-binding site is contributed by 190-192 (RLH). Arginine 194 contacts FMN.

This sequence belongs to the pyridoxamine 5'-phosphate oxidase family. In terms of assembly, homodimer. Requires FMN as cofactor.

The enzyme catalyses pyridoxamine 5'-phosphate + O2 + H2O = pyridoxal 5'-phosphate + H2O2 + NH4(+). It catalyses the reaction pyridoxine 5'-phosphate + O2 = pyridoxal 5'-phosphate + H2O2. It functions in the pathway cofactor metabolism; pyridoxal 5'-phosphate salvage; pyridoxal 5'-phosphate from pyridoxamine 5'-phosphate: step 1/1. It participates in cofactor metabolism; pyridoxal 5'-phosphate salvage; pyridoxal 5'-phosphate from pyridoxine 5'-phosphate: step 1/1. Its function is as follows. Catalyzes the oxidation of either pyridoxine 5'-phosphate (PNP) or pyridoxamine 5'-phosphate (PMP) into pyridoxal 5'-phosphate (PLP). The chain is Pyridoxine/pyridoxamine 5'-phosphate oxidase 1 from Ralstonia nicotianae (strain ATCC BAA-1114 / GMI1000) (Ralstonia solanacearum).